The following is a 215-amino-acid chain: uncharacterized protein (215 aa).

Residues 25–48 (LKSASPGPAPASQQASSFGSAPAQ) form a disordered region. Residues 27 to 47 (SASPGPAPASQQASSFGSAPA) are compositionally biased toward low complexity.

This is an uncharacterized protein from Homo sapiens (Human).